The following is a 292-amino-acid chain: 4-hydroxybenzoate octaprenyltransferase (292 aa).

9 consecutive transmembrane segments (helical) span residues 24–44 (IGTL…NAGM), 47–67 (LTNF…GCVI), 97–117 (AISL…MLSV), 119–139 (TILL…MKRY), 145–165 (VVLG…SINA), 171–191 (WLLF…YAMV), 214–234 (HIIG…GALN), 238–258 (LSYW…QVLI), and 270–290 (FLNN…SYPV).

It belongs to the UbiA prenyltransferase family. Requires Mg(2+) as cofactor.

The protein localises to the cell inner membrane. It catalyses the reaction all-trans-octaprenyl diphosphate + 4-hydroxybenzoate = 4-hydroxy-3-(all-trans-octaprenyl)benzoate + diphosphate. It functions in the pathway cofactor biosynthesis; ubiquinone biosynthesis. In terms of biological role, catalyzes the prenylation of para-hydroxybenzoate (PHB) with an all-trans polyprenyl group. Mediates the second step in the final reaction sequence of ubiquinone-8 (UQ-8) biosynthesis, which is the condensation of the polyisoprenoid side chain with PHB, generating the first membrane-bound Q intermediate 3-octaprenyl-4-hydroxybenzoate. This Pseudoalteromonas translucida (strain TAC 125) protein is 4-hydroxybenzoate octaprenyltransferase.